Consider the following 207-residue polypeptide: Ribosomal RNA large subunit methyltransferase E (207 aa).

G60, W62, D80, D96, and D121 together coordinate S-adenosyl-L-methionine. Residue K161 is the Proton acceptor of the active site.

This sequence belongs to the class I-like SAM-binding methyltransferase superfamily. RNA methyltransferase RlmE family.

The protein localises to the cytoplasm. The enzyme catalyses uridine(2552) in 23S rRNA + S-adenosyl-L-methionine = 2'-O-methyluridine(2552) in 23S rRNA + S-adenosyl-L-homocysteine + H(+). Its function is as follows. Specifically methylates the uridine in position 2552 of 23S rRNA at the 2'-O position of the ribose in the fully assembled 50S ribosomal subunit. The protein is Ribosomal RNA large subunit methyltransferase E of Pseudomonas aeruginosa (strain UCBPP-PA14).